The following is a 382-amino-acid chain: Mannitol-1-phosphate 5-dehydrogenase (382 aa).

NAD(+) is bound at residue 3–14; it reads ALHFGAGNIGRG. Lys269 bears the N6-acetyllysine mark.

This sequence belongs to the mannitol dehydrogenase family.

It carries out the reaction D-mannitol 1-phosphate + NAD(+) = beta-D-fructose 6-phosphate + NADH + H(+). The protein is Mannitol-1-phosphate 5-dehydrogenase of Escherichia coli O139:H28 (strain E24377A / ETEC).